Here is a 341-residue protein sequence, read N- to C-terminus: Acetylpolyamine amidohydrolase (341 aa).

The active-site Proton donor/acceptor is H157. Zn(2+) is bound by residues D192, H194, and D281.

Belongs to the histone deacetylase family. As to quaternary structure, homodimer. The cofactor is Zn(2+).

It catalyses the reaction N-acetylputrescine + H2O = putrescine + acetate. The catalysed reaction is N-acetylcadaverine + H2O = cadaverine + acetate. The protein operates within amine and polyamine metabolism. Functionally, involved in polyamine metabolism. Catalyzes the deacetylation of various acetylated polyamines such as N-acetylputrescine and N-acetylcadaverine. This is Acetylpolyamine amidohydrolase from Burkholderia pseudomallei (strain 1710b).